Consider the following 392-residue polypeptide: Peptidoglycan hydrolase PcsB (392 aa).

The signal sequence occupies residues 1-27; the sequence is MKKKILASLLLSTVMVSQVAVLTTAHA. Coiled-coil stretches lie at residues 34–96 and 191–227; these read IAAQ…LSKN and TKQA…AEAE. The interval 47–267 is interacts with large extracellular loop of FtsX; sequence QQQEAQKQVD…TAQVQAVSES (221 aa). A Peptidase C51 domain is found at 267-390; that stretch reads SAAAPVRAKV…TSEGFVTYIY (124 aa).

In terms of assembly, homodimer. Interacts (via N-terminal coiled coil domain) with FtsX (via large extracellular loop). This interaction directs PcsB to equatorial and septal sites of dividing cells. Interacts with FtsE.

It is found in the cell membrane. Its subcellular location is the cell septum. The protein resides in the secreted. Lacks peptidoglycan-hydrolase activity in vitro, probably due to auto-inhibition by the CC domain. In the homodimer, interaction between the CC domain in one monomer and the hydrolase active site in the peptidase C51/CHAP domain in the other monomer probably mediates auto-inhibition of the hydrolase activity. In terms of biological role, peptidoglycan-hydrolase activity. Required in maintaining normal growth and cellular morphology. Involved in splitting of the septum during cell division. The polypeptide is Peptidoglycan hydrolase PcsB (Streptococcus pneumoniae serotype 2 (strain D39 / NCTC 7466)).